The following is a 101-amino-acid chain: Small ribosomal subunit protein uS14 (101 aa).

The protein belongs to the universal ribosomal protein uS14 family. In terms of assembly, part of the 30S ribosomal subunit. Contacts proteins S3 and S10.

In terms of biological role, binds 16S rRNA, required for the assembly of 30S particles and may also be responsible for determining the conformation of the 16S rRNA at the A site. The polypeptide is Small ribosomal subunit protein uS14 (Alkalilimnicola ehrlichii (strain ATCC BAA-1101 / DSM 17681 / MLHE-1)).